Here is a 1187-residue protein sequence, read N- to C-terminus: Nucleolar protein 6 (1187 aa).

Residues 1–20 are compositionally biased toward basic and acidic residues; it reads MGRIKENQSKKKTLLRDSKA. Disordered regions lie at residues 1–64 and 1134–1187; these read MGRI…FKHP and REQR…SALC.

It belongs to the NRAP family. Part of the small subunit (SSU) processome, composed of more than 70 proteins and the RNA chaperone small nucleolar RNA (snoRNA) U3.

The protein localises to the nucleus. The protein resides in the nucleolus. It is found in the chromosome. Functionally, part of the small subunit (SSU) processome, first precursor of the small eukaryotic ribosomal subunit. During the assembly of the SSU processome in the nucleolus, many ribosome biogenesis factors, an RNA chaperone and ribosomal proteins associate with the nascent pre-rRNA and work in concert to generate RNA folding, modifications, rearrangements and cleavage as well as targeted degradation of pre-ribosomal RNA by the RNA exosome. The sequence is that of Nucleolar protein 6 from Drosophila mojavensis (Fruit fly).